The chain runs to 198 residues: Chitin synthase 2 (198 aa).

This sequence belongs to the chitin synthase family. Class III subfamily.

It localises to the cell membrane. It carries out the reaction [(1-&gt;4)-N-acetyl-beta-D-glucosaminyl](n) + UDP-N-acetyl-alpha-D-glucosamine = [(1-&gt;4)-N-acetyl-beta-D-glucosaminyl](n+1) + UDP + H(+). In terms of biological role, polymerizes chitin, a structural polymer of the cell wall and septum, by transferring the sugar moiety of UDP-GlcNAc to the non-reducing end of the growing chitin polymer. The sequence is that of Chitin synthase 2 (CHS2) from Rhinocladiella atrovirens.